The chain runs to 397 residues: Methylthioribose kinase (397 aa).

ATP contacts are provided by residues Asn-44, Lys-61, and 115–117 (EDL). Asp-233 is a binding site for substrate. 250–252 (DPE) serves as a coordination point for ATP. Arg-340 provides a ligand contact to substrate.

It belongs to the methylthioribose kinase family. As to quaternary structure, homodimer.

The catalysed reaction is 5-(methylsulfanyl)-D-ribose + ATP = 5-(methylsulfanyl)-alpha-D-ribose 1-phosphate + ADP + H(+). It functions in the pathway amino-acid biosynthesis; L-methionine biosynthesis via salvage pathway; S-methyl-5-thio-alpha-D-ribose 1-phosphate from S-methyl-5'-thioadenosine (hydrolase route): step 2/2. Functionally, catalyzes the phosphorylation of methylthioribose into methylthioribose-1-phosphate. The sequence is that of Methylthioribose kinase (mtnK) from Bacillus subtilis (strain 168).